We begin with the raw amino-acid sequence, 103 residues long: 4-amino-4-deoxychorismate mutase (103 aa).

Residues 1–92 form the Chorismate mutase domain; sequence MTEQNELQRL…EMCRVEDLVM (92 aa).

The catalysed reaction is 4-amino-4-deoxychorismate = 4-amino-4-deoxyprephenate. Its pathway is antibiotic biosynthesis. Functionally, involved in chloramphenicol biosynthesis. Probably catalyzes the conversion of 4-amino-4-deoxychorismate to 4-amino-4-deoxyprephenate. The polypeptide is 4-amino-4-deoxychorismate mutase (Streptomyces venezuelae (strain ATCC 10712 / CBS 650.69 / DSM 40230 / JCM 4526 / NBRC 13096 / PD 04745)).